Reading from the N-terminus, the 616-residue chain is uncharacterized protein (616 aa).

This sequence belongs to the UbiD family.

This is an uncharacterized protein from Helicobacter pylori (strain ATCC 700392 / 26695) (Campylobacter pylori).